The sequence spans 109 residues: MKQSNLCPDCARAALRLPRQAGRGAIWLYRHTLSPLVGYHCRHLPTCSVYGDEAIGRFGLWAGGWMTLARLLRCQPWGTSGIDNVPAEPPGGARWYLPWRYGRWRGVND.

This sequence belongs to the UPF0161 family.

The protein localises to the cell inner membrane. Functionally, could be involved in insertion of integral membrane proteins into the membrane. The chain is Putative membrane protein insertion efficiency factor from Rhodopseudomonas palustris (strain BisA53).